A 376-amino-acid chain; its full sequence is Guanine nucleotide-binding protein G(s) subunit alpha (376 aa).

A lipid anchor (N-palmitoyl glycine) is attached at Gly-2. The S-palmitoyl cysteine moiety is linked to residue Cys-3. The G-alpha domain occupies 36–376 (GTHRLLLLGA…RMHLRQYELL (341 aa)). A G1 motif region spans residues 39-52 (RLLLLGAGESGKST). GTP-binding positions include 44 to 51 (GAGESGKS), 180 to 186 (LRCRVLT), 205 to 209 (DVGGQ), 274 to 277 (NKQD), and Ala-348. Positions 51 and 186 each coordinate Mg(2+). Residues 178–186 (DILRCRVLT) are G2 motif. Residues 201 to 210 (FHMFDVGGQR) form a G3 motif region. The tract at residues 270 to 277 (ILFLNKQD) is G4 motif. The segment at 346–351 (TCAVDT) is G5 motif.

It belongs to the G-alpha family. G(s) subfamily. G proteins are composed of 3 units; alpha, beta and gamma. The alpha chain contains the guanine nucleotide binding site.

In terms of biological role, guanine nucleotide-binding proteins (G proteins) are involved as modulators or transducers in various transmembrane signaling systems. The G(s) protein is involved in hormonal regulation of adenylate cyclase: it activates the cyclase in response to beta-adrenergic stimuli. In Lymnaea stagnalis (Great pond snail), this protein is Guanine nucleotide-binding protein G(s) subunit alpha.